We begin with the raw amino-acid sequence, 319 residues long: Phospho-N-acetylmuramoyl-pentapeptide-transferase (319 aa).

9 consecutive transmembrane segments (helical) span residues 5–25 (LIAF…LIIW), 51–71 (TMGG…ICAY), 79–99 (VWIL…DDGL), 119–139 (LLVA…FALY), 149–169 (VVLF…AVNL), 173–193 (LDGL…WLAF), 197–217 (NFGV…FFMF), 224–246 (IFMG…IFLG), and 299–319 (VDLV…MIWG).

Belongs to the glycosyltransferase 4 family. MraY subfamily. It depends on Mg(2+) as a cofactor.

It is found in the cell membrane. It catalyses the reaction UDP-N-acetyl-alpha-D-muramoyl-L-alanyl-gamma-D-glutamyl-L-lysyl-D-alanyl-D-alanine + di-trans,octa-cis-undecaprenyl phosphate = Mur2Ac(oyl-L-Ala-gamma-D-Glu-L-Lys-D-Ala-D-Ala)-di-trans,octa-cis-undecaprenyl diphosphate + UMP. The protein operates within cell wall biogenesis; peptidoglycan biosynthesis. Catalyzes the initial step of the lipid cycle reactions in the biosynthesis of the cell wall peptidoglycan: transfers peptidoglycan precursor phospho-MurNAc-pentapeptide from UDP-MurNAc-pentapeptide onto the lipid carrier undecaprenyl phosphate, yielding undecaprenyl-pyrophosphoryl-MurNAc-pentapeptide, known as lipid I. The polypeptide is Phospho-N-acetylmuramoyl-pentapeptide-transferase (Lactobacillus delbrueckii subsp. bulgaricus (strain ATCC BAA-365 / Lb-18)).